Reading from the N-terminus, the 121-residue chain is Large ribosomal subunit protein bL20 (121 aa).

The protein belongs to the bacterial ribosomal protein bL20 family.

Binds directly to 23S ribosomal RNA and is necessary for the in vitro assembly process of the 50S ribosomal subunit. It is not involved in the protein synthesizing functions of that subunit. This chain is Large ribosomal subunit protein bL20, found in Orientia tsutsugamushi (strain Boryong) (Rickettsia tsutsugamushi).